The primary structure comprises 192 residues: Thymidylate kinase (192 aa).

G7–S14 serves as a coordination point for ATP.

Belongs to the thymidylate kinase family.

The enzyme catalyses dTMP + ATP = dTDP + ADP. Phosphorylation of dTMP to form dTDP in both de novo and salvage pathways of dTTP synthesis. This Campylobacter jejuni subsp. doylei (strain ATCC BAA-1458 / RM4099 / 269.97) protein is Thymidylate kinase.